Reading from the N-terminus, the 338-residue chain is Uroporphyrinogen decarboxylase (338 aa).

Residues 23 to 27 (RQAGR), aspartate 72, tyrosine 146, threonine 201, and histidine 312 each bind substrate.

Belongs to the uroporphyrinogen decarboxylase family. Homodimer.

The protein localises to the cytoplasm. It catalyses the reaction uroporphyrinogen III + 4 H(+) = coproporphyrinogen III + 4 CO2. Its pathway is porphyrin-containing compound metabolism; protoporphyrin-IX biosynthesis; coproporphyrinogen-III from 5-aminolevulinate: step 4/4. In terms of biological role, catalyzes the decarboxylation of four acetate groups of uroporphyrinogen-III to yield coproporphyrinogen-III. The chain is Uroporphyrinogen decarboxylase from Thermodesulfovibrio yellowstonii (strain ATCC 51303 / DSM 11347 / YP87).